Reading from the N-terminus, the 427-residue chain is UPF0229 protein YeaH (427 aa).

A compositionally biased stretch (basic and acidic residues) spans 79 to 90; it reads NDHFVQNDRIER. The disordered stretch occupies residues 79–110; it reads NDHFVQNDRIERPQGGGGGSGSGQGQASQDGE. Residues 92–102 are compositionally biased toward gly residues; the sequence is QGGGGGSGSGQ.

The protein belongs to the UPF0229 family.

This Escherichia coli (strain K12 / MC4100 / BW2952) protein is UPF0229 protein YeaH.